A 363-amino-acid polypeptide reads, in one-letter code: MGVLEKIQEIEAEMRRTQKNKATEYHLGLLKGKLAKLRAQLLEPTSKSGPKGEGFDVLKSGDARVAFIGFPSVGKSTLLSAITKTKSATASYEFTTLTAIPGVLEYDGAEIQMLDLPGIIEGASQGRGGRQAVSAARTADLILMVLDATKAADQREKIEYELEQVGIRLNRQPPNVTLTIKKNGGIKFNHTVPLTHMDYKMAYNILHEYRIHNADILIREDITVDDFIDLVMGNRRYINCLYCYSKIDAVSLEEVDRLARLPKSVVISCNMKLNLDFLKERIWEELNLYRIYTKRKGEMPDFSEALIVRKGSTIEQVCNRIHRTLAEQLKYALVWGTSAKHSPQVVGLNHRVEEGDVVTIVTK.

In terms of domain architecture, OBG-type G spans 63-287; the sequence is ARVAFIGFPS…LKERIWEELN (225 aa). GTP-binding positions include 69-76, 115-119, and 246-249; these read GFPSVGKS, DLPGI, and KIDA. The TGS domain occupies 287 to 362; sequence NLYRIYTKRK…EEGDVVTIVT (76 aa).

This sequence belongs to the TRAFAC class OBG-HflX-like GTPase superfamily. OBG GTPase family.

The polypeptide is GTP-binding protein 1 (gtp1) (Schizosaccharomyces pombe (strain 972 / ATCC 24843) (Fission yeast)).